Reading from the N-terminus, the 324-residue chain is Hydroxyacylglutathione hydrolase 2, mitochondrial (324 aa).

The N-terminal 64 residues, 1–64, are a transit peptide targeting the mitochondrion; the sequence is MQTISKASSA…KSIRVSKFCS (64 aa). Zn(2+) contacts are provided by His-124 and His-126. Fe cation-binding residues include Asp-128 and His-129. Residues His-182 and Asp-201 each coordinate Zn(2+). Residues Asp-201 and His-239 each contribute to the Fe cation site.

It belongs to the metallo-beta-lactamase superfamily. Glyoxalase II family. Monomer. Fe(3+) is required as a cofactor. The cofactor is Fe(2+). Requires Zn(2+) as cofactor.

The protein localises to the mitochondrion. It carries out the reaction an S-(2-hydroxyacyl)glutathione + H2O = a 2-hydroxy carboxylate + glutathione + H(+). Its pathway is secondary metabolite metabolism; methylglyoxal degradation; (R)-lactate from methylglyoxal: step 2/2. Its function is as follows. Thiolesterase that catalyzes the hydrolysis of S-D-lactoyl-glutathione to form glutathione and D-lactic acid. The sequence is that of Hydroxyacylglutathione hydrolase 2, mitochondrial from Arabidopsis thaliana (Mouse-ear cress).